A 102-amino-acid chain; its full sequence is UPF0235 protein Noc_3000 (102 aa).

The protein belongs to the UPF0235 family.

The chain is UPF0235 protein Noc_3000 from Nitrosococcus oceani (strain ATCC 19707 / BCRC 17464 / JCM 30415 / NCIMB 11848 / C-107).